We begin with the raw amino-acid sequence, 300 residues long: GTPase Era (300 aa).

The Era-type G domain occupies 8–176 (RCGYVAIVGR…EALIAKHLPE (169 aa)). Positions 16–23 (GRPNVGKS) are G1. Residue 16-23 (GRPNVGKS) coordinates GTP. The interval 42–46 (QTTRH) is G2. A G3 region spans residues 63 to 66 (DTPG). GTP-binding positions include 63–67 (DTPGM) and 125–128 (NKTD). Residues 125-128 (NKTD) form a G4 region. A G5 region spans residues 155–157 (ISA). The KH type-2 domain maps to 199-283 (VREKIMRQLG…MLNLWVKVKG (85 aa)).

This sequence belongs to the TRAFAC class TrmE-Era-EngA-EngB-Septin-like GTPase superfamily. Era GTPase family. Monomer.

The protein resides in the cytoplasm. Its subcellular location is the cell inner membrane. Functionally, an essential GTPase that binds both GDP and GTP, with rapid nucleotide exchange. Plays a role in 16S rRNA processing and 30S ribosomal subunit biogenesis and possibly also in cell cycle regulation and energy metabolism. The polypeptide is GTPase Era (Pseudomonas putida (strain W619)).